A 726-amino-acid polypeptide reads, in one-letter code: Probable dipeptidyl-peptidase 5 (726 aa).

Positions 1–19 (MAAAKWLIASLAFASSGLA) are cleaved as a signal peptide. N-linked (GlcNAc...) asparagine glycosylation is found at N96 and N252. Residues 269-291 (AEPINKRNGPRTPQGIEGASSSP) are disordered. The active-site Charge relay system is S558. The N-linked (GlcNAc...) asparagine glycan is linked to N605. Residues D641 and H673 each act as charge relay system in the active site. The N-linked (GlcNAc...) asparagine glycan is linked to N699.

It belongs to the peptidase S9C family.

The protein localises to the secreted. Its function is as follows. Extracellular dipeptidyl-peptidase which removes N-terminal dipeptides sequentially from polypeptides having unsubstituted N-termini. Contributes to pathogenicity. The chain is Probable dipeptidyl-peptidase 5 (DPP5) from Trichophyton verrucosum (strain HKI 0517).